The following is a 925-amino-acid chain: Protein translocase subunit SecA (925 aa).

ATP-binding positions include Gln-87, 105–109, and Asp-512; that span reads GEGKT. Zn(2+) contacts are provided by Cys-910, Cys-912, Cys-921, and His-922.

This sequence belongs to the SecA family. Monomer and homodimer. Part of the essential Sec protein translocation apparatus which comprises SecA, SecYEG and auxiliary proteins SecDF-YajC and YidC. Requires Zn(2+) as cofactor.

It is found in the cell inner membrane. Its subcellular location is the cytoplasm. It carries out the reaction ATP + H2O + cellular proteinSide 1 = ADP + phosphate + cellular proteinSide 2.. Functionally, part of the Sec protein translocase complex. Interacts with the SecYEG preprotein conducting channel. Has a central role in coupling the hydrolysis of ATP to the transfer of proteins into and across the cell membrane, serving both as a receptor for the preprotein-SecB complex and as an ATP-driven molecular motor driving the stepwise translocation of polypeptide chains across the membrane. This Psychrobacter sp. (strain PRwf-1) protein is Protein translocase subunit SecA.